Here is a 338-residue protein sequence, read N- to C-terminus: Anthranilate phosphoribosyltransferase (338 aa).

5-phospho-alpha-D-ribose 1-diphosphate contacts are provided by residues Gly-81, 84–85, Thr-89, 91–94, 109–117, and Thr-121; these read GD, NIST, and KHGNRAQSS. Position 81 (Gly-81) interacts with anthranilate. Mg(2+) is bound at residue Ser-93. Asn-112 serves as a coordination point for anthranilate. Residue Arg-167 coordinates anthranilate. Mg(2+)-binding residues include Asp-225 and Glu-226.

This sequence belongs to the anthranilate phosphoribosyltransferase family. Homodimer. It depends on Mg(2+) as a cofactor.

The enzyme catalyses N-(5-phospho-beta-D-ribosyl)anthranilate + diphosphate = 5-phospho-alpha-D-ribose 1-diphosphate + anthranilate. The protein operates within amino-acid biosynthesis; L-tryptophan biosynthesis; L-tryptophan from chorismate: step 2/5. Functionally, catalyzes the transfer of the phosphoribosyl group of 5-phosphorylribose-1-pyrophosphate (PRPP) to anthranilate to yield N-(5'-phosphoribosyl)-anthranilate (PRA). The sequence is that of Anthranilate phosphoribosyltransferase from Rhizobium rhizogenes (strain K84 / ATCC BAA-868) (Agrobacterium radiobacter).